The chain runs to 591 residues: Zinc finger protein 48 (591 aa).

Methionine 1 bears the N-acetylmethionine mark. Disordered stretches follow at residues 1–24 and 55–80; these read MEASPGDEFEHSPQERDGPEIKEE and GLGKRQPRDPVPRILGEPRWGQGSND. Composition is skewed to basic and acidic residues over residues 8-24 and 55-65; these read EFEHSPQERDGPEIKEE and GLGKRQPRDPV. Residue serine 12 is modified to Phosphoserine. A Glycyl lysine isopeptide (Lys-Gly) (interchain with G-Cter in SUMO2) cross-link involves residue lysine 58. C2H2-type zinc fingers lie at residues 83–105 and 111–133; these read AVCGECGKSFRQMSDLVKHQRTH and YKCGVCGKGFGDSSARIKHQRTH. Positions 131–160 are disordered; that stretch reads RTHTGEKAYRVRPPAPGPPKMPRSRIPAGE. Lysine 150 participates in a covalent cross-link: Glycyl lysine isopeptide (Lys-Gly) (interchain with G-Cter in SUMO2). 2 consecutive C2H2-type zinc fingers follow at residues 163-185 and 191-213; these read TICGECGKSFRQSSDLVKHQRTH and YKCGICGKGFGDSSARIKHQRTH. The segment at 206–241 is disordered; sequence RIKHQRTHRGDQLPRPVVPRRQPSPAAPAAPHRPKA. The segment covering 224–235 has biased composition (low complexity); sequence PRRQPSPAAPAA. Residue lysine 240 forms a Glycyl lysine isopeptide (Lys-Gly) (interchain with G-Cter in SUMO2) linkage. C2H2-type zinc fingers lie at residues 246 to 268 and 274 to 296; these read YICTDCGKRFVLSCSLLSHQRSH and FGCDVCGKEFARGSDLVKHLRVH. Lysine 300 participates in a covalent cross-link: Glycyl lysine isopeptide (Lys-Gly) (interchain with G-Cter in SUMO2). 2 C2H2-type zinc fingers span residues 302–324 and 330–352; these read YLCPECGKGFADSSARVKHLRTH and HACPECNRSFSLSSTLLRHRLTH. Positions 372–429 are disordered; the sequence is PPPPPLGTSPSLTPRSPSHSSDGPFGLPGLEPEPGGPQAGEPPPPLAGDKPHKCPECG. Residues 379–404 show a composition bias toward low complexity; the sequence is TSPSLTPRSPSHSSDGPFGLPGLEPE. The segment at 423-445 adopts a C2H2-type 9 zinc-finger fold; that stretch reads HKCPECGKGFRRSSDLVKHHRVH. Residue lysine 449 forms a Glycyl lysine isopeptide (Lys-Gly) (interchain with G-Cter in SUMO2) linkage. The C2H2-type 10 zinc-finger motif lies at 451-473; that stretch reads YLCPECGKGFADSSARVKHLRTH. The disordered stretch occupies residues 464-512; the sequence is SARVKHLRTHQGERTRPPPPPSTLLRPHNPPGSVPIVPQSRVQGRPSGP. Residues 480-496 are compositionally biased toward pro residues; it reads PPPPPSTLLRPHNPPGS. 2 C2H2-type zinc fingers span residues 516 to 538 and 544 to 566; these read HVCGFCGKEFPRSSDLVKHRRTH and YKCAECGKGFGDSSARIKHQRGH. A disordered region spans residues 564-591; it reads RGHLALKPFGVGDGPPRPLKEESPAGLE. A compositionally biased stretch (basic and acidic residues) spans 581-591; it reads PLKEESPAGLE. Lysine 583 is covalently cross-linked (Glycyl lysine isopeptide (Lys-Gly) (interchain with G-Cter in SUMO2)).

The protein belongs to the krueppel C2H2-type zinc-finger protein family.

The protein resides in the nucleus. In terms of biological role, may be involved in transcriptional regulation. In Mus musculus (Mouse), this protein is Zinc finger protein 48 (Znf48).